The following is a 508-amino-acid chain: Probable zinc metalloprotease MCYG_04217 (508 aa).

N-linked (GlcNAc...) asparagine glycosylation occurs at N111. 3 residues coordinate Zn(2+): H182, D202, and E238. N253 is a glycosylation site (N-linked (GlcNAc...) asparagine). Zn(2+) is bound at residue D265. The Fibronectin type-III domain occupies 422-508 (MPRNVRVDTS…ERGVAVLPFP (87 aa)). N435 carries N-linked (GlcNAc...) asparagine glycosylation.

Belongs to the peptidase M28 family. M28B subfamily. It depends on Zn(2+) as a cofactor.

The protein localises to the secreted. The chain is Probable zinc metalloprotease MCYG_04217 from Arthroderma otae (strain ATCC MYA-4605 / CBS 113480) (Microsporum canis).